A 264-amino-acid chain; its full sequence is Thymidylate synthase (264 aa).

R21 serves as a coordination point for dUMP. H51 contributes to the (6R)-5,10-methylene-5,6,7,8-tetrahydrofolate binding site. Residue R126–R127 coordinates dUMP. Catalysis depends on C146, which acts as the Nucleophile. Residues R166–D169, N177, and H207–Y209 each bind dUMP. D169 is a binding site for (6R)-5,10-methylene-5,6,7,8-tetrahydrofolate. A263 is a binding site for (6R)-5,10-methylene-5,6,7,8-tetrahydrofolate.

Belongs to the thymidylate synthase family. Bacterial-type ThyA subfamily. As to quaternary structure, homodimer.

It is found in the cytoplasm. The enzyme catalyses dUMP + (6R)-5,10-methylene-5,6,7,8-tetrahydrofolate = 7,8-dihydrofolate + dTMP. The protein operates within pyrimidine metabolism; dTTP biosynthesis. Functionally, catalyzes the reductive methylation of 2'-deoxyuridine-5'-monophosphate (dUMP) to 2'-deoxythymidine-5'-monophosphate (dTMP) while utilizing 5,10-methylenetetrahydrofolate (mTHF) as the methyl donor and reductant in the reaction, yielding dihydrofolate (DHF) as a by-product. This enzymatic reaction provides an intracellular de novo source of dTMP, an essential precursor for DNA biosynthesis. This is Thymidylate synthase from Bdellovibrio bacteriovorus (strain ATCC 15356 / DSM 50701 / NCIMB 9529 / HD100).